Consider the following 315-residue polypeptide: Ribosomal RNA small subunit methyltransferase H (315 aa).

S-adenosyl-L-methionine is bound by residues 37 to 39 (AGH), aspartate 57, tyrosine 84, aspartate 105, and glutamine 112.

Belongs to the methyltransferase superfamily. RsmH family.

The protein resides in the cytoplasm. The enzyme catalyses cytidine(1402) in 16S rRNA + S-adenosyl-L-methionine = N(4)-methylcytidine(1402) in 16S rRNA + S-adenosyl-L-homocysteine + H(+). In terms of biological role, specifically methylates the N4 position of cytidine in position 1402 (C1402) of 16S rRNA. This chain is Ribosomal RNA small subunit methyltransferase H, found in Lachnospira eligens (strain ATCC 27750 / DSM 3376 / VPI C15-48 / C15-B4) (Eubacterium eligens).